A 284-amino-acid polypeptide reads, in one-letter code: Homeobox protein SMOX-5 (284 aa).

Residues 37–96 (RRKTRTTFSNCQLNELENNFNRQRYLTPTDRDRIAKHLGLTNTQVITWFQNRRAKLKREA) constitute a DNA-binding region (homeobox). Residues 117-172 (LSLSDHDHEETQIDDENEQGDNNNDDDGDDNDVEEDDGEEQEKNHTKYLTQPPSIS) form a disordered region. A compositionally biased stretch (acidic residues) spans 128-156 (QIDDENEQGDNNNDDDGDDNDVEEDDGEE).

The protein localises to the nucleus. In Schistosoma mansoni (Blood fluke), this protein is Homeobox protein SMOX-5 (SMOX-5).